A 73-amino-acid polypeptide reads, in one-letter code: Translation initiation factor IF-1 (73 aa).

In terms of domain architecture, S1-like spans 1–73 (MGKKEEAFEV…TKGRIVYRER (73 aa)).

The protein belongs to the IF-1 family. As to quaternary structure, component of the 30S ribosomal translation pre-initiation complex which assembles on the 30S ribosome in the order IF-2 and IF-3, IF-1 and N-formylmethionyl-tRNA(fMet); mRNA recruitment can occur at any time during PIC assembly.

The protein resides in the cytoplasm. Its function is as follows. One of the essential components for the initiation of protein synthesis. Stabilizes the binding of IF-2 and IF-3 on the 30S subunit to which N-formylmethionyl-tRNA(fMet) subsequently binds. Helps modulate mRNA selection, yielding the 30S pre-initiation complex (PIC). Upon addition of the 50S ribosomal subunit IF-1, IF-2 and IF-3 are released leaving the mature 70S translation initiation complex. This Rhodopirellula baltica (strain DSM 10527 / NCIMB 13988 / SH1) protein is Translation initiation factor IF-1.